Reading from the N-terminus, the 305-residue chain is tRNA dimethylallyltransferase (305 aa).

8–15 contributes to the ATP binding site; sequence GPTAVGKT. 10–15 contacts substrate; sequence TAVGKT. The tract at residues 33–36 is interaction with substrate tRNA; sequence DSRQ.

This sequence belongs to the IPP transferase family. Monomer. Requires Mg(2+) as cofactor.

It carries out the reaction adenosine(37) in tRNA + dimethylallyl diphosphate = N(6)-dimethylallyladenosine(37) in tRNA + diphosphate. In terms of biological role, catalyzes the transfer of a dimethylallyl group onto the adenine at position 37 in tRNAs that read codons beginning with uridine, leading to the formation of N6-(dimethylallyl)adenosine (i(6)A). The sequence is that of tRNA dimethylallyltransferase from Thermotoga neapolitana (strain ATCC 49049 / DSM 4359 / NBRC 107923 / NS-E).